A 112-amino-acid polypeptide reads, in one-letter code: Integration host factor subunit alpha (112 aa).

It belongs to the bacterial histone-like protein family. As to quaternary structure, heterodimer of an alpha and a beta chain.

Functionally, this protein is one of the two subunits of integration host factor, a specific DNA-binding protein that functions in genetic recombination as well as in transcriptional and translational control. This chain is Integration host factor subunit alpha, found in Rhizobium leguminosarum bv. trifolii (strain WSM2304).